The primary structure comprises 101 residues: Large ribosomal subunit protein uL23 (101 aa).

It belongs to the universal ribosomal protein uL23 family. Part of the 50S ribosomal subunit. Contacts protein L29, and trigger factor when it is bound to the ribosome.

Functionally, one of the early assembly proteins it binds 23S rRNA. One of the proteins that surrounds the polypeptide exit tunnel on the outside of the ribosome. Forms the main docking site for trigger factor binding to the ribosome. In Corynebacterium kroppenstedtii (strain DSM 44385 / JCM 11950 / CIP 105744 / CCUG 35717), this protein is Large ribosomal subunit protein uL23.